The following is a 92-amino-acid chain: UPF0223 protein SSP1692 (92 aa).

This sequence belongs to the UPF0223 family.

In Staphylococcus saprophyticus subsp. saprophyticus (strain ATCC 15305 / DSM 20229 / NCIMB 8711 / NCTC 7292 / S-41), this protein is UPF0223 protein SSP1692.